Reading from the N-terminus, the 112-residue chain is Mu-ctenitoxin-Pn1a (112 aa).

The N-terminal stretch at 1–19 (MKLLGIFLVASFAFVLSFG) is a signal peptide. The propeptide occupies 20–33 (EEMIEGENPLEDQR). 7 disulfides stabilise this stretch: Cys-39–Cys-56, Cys-46–Cys-62, Cys-53–Cys-85, Cys-55–Cys-73, Cys-64–Cys-71, Cys-91–Cys-106, and Cys-102–Cys-110. Gly-111 carries the post-translational modification Glycine amide.

Belongs to the neurotoxin 04 (omega-agtx) family. 02 (Tx1) subfamily. In terms of processing, contains 7 disulfide bonds. Expressed by the venom gland.

The protein localises to the secreted. Reversible inhibitor of neuronal sodium channels (Nav1.2/ SCN2A) that binds in proximity to site 1 and displays increasing affinity as the membrane potential is depolarized. Induces excitatory symptoms and spastic paralysis in mice. This Phoneutria nigriventer (Brazilian armed spider) protein is Mu-ctenitoxin-Pn1a.